The chain runs to 292 residues: uncharacterized protein (292 aa).

Residues 1–21 (MNSNSNKKRDPARFPAGVAQG) form the signal peptide. A disordered region spans residues 1-30 (MNSNSNKKRDPARFPAGVAQGCSTTRAGDL).

This is an uncharacterized protein from Treponema pallidum (strain Nichols).